Consider the following 752-residue polypeptide: Photosystem I P700 chlorophyll a apoprotein A1 (752 aa).

The next 8 helical transmembrane spans lie at 73 to 96 (IFSA…FHGA), 159 to 182 (LYVT…FHYH), 198 to 222 (LNHH…HVSA), 294 to 312 (IAHH…GHQY), 349 to 372 (WHAQ…HHMY), 388 to 414 (LCIF…IFMV), 436 to 458 (AIIS…LYIH), and 533 to 551 (FLIH…LILL). [4Fe-4S] cluster-binding residues include Cys575 and Cys584. Helical transmembrane passes span 591–612 (HVFL…HFSW) and 666–688 (LSAY…MFLF). His677 is a binding site for chlorophyll a'. Met685 and Tyr693 together coordinate chlorophyll a. Trp694 is a binding site for phylloquinone. A helical transmembrane segment spans residues 726-746 (AVGVAHYLLGGIATTWAFFHA).

Belongs to the PsaA/PsaB family. In terms of assembly, the PsaA/B heterodimer binds the P700 chlorophyll special pair and subsequent electron acceptors. PSI consists of a core antenna complex that captures photons, and an electron transfer chain that converts photonic excitation into a charge separation. The cyanobacterial PSI reaction center is composed of one copy each of PsaA,B,C,D,E,F,I,J,K,L,M and X, and forms trimeric complexes. Requires PSI electron transfer chain: 5 chlorophyll a, 1 chlorophyll a', 2 phylloquinones and 3 4Fe-4S clusters. PSI core antenna: 90 chlorophyll a, 22 carotenoids, 3 phospholipids and 1 galactolipid. P700 is a chlorophyll a/chlorophyll a' dimer, A0 is one or more chlorophyll a, A1 is one or both phylloquinones and FX is a shared 4Fe-4S iron-sulfur center. as cofactor.

The protein resides in the cellular thylakoid membrane. It carries out the reaction reduced [plastocyanin] + hnu + oxidized [2Fe-2S]-[ferredoxin] = oxidized [plastocyanin] + reduced [2Fe-2S]-[ferredoxin]. Functionally, psaA and PsaB bind P700, the primary electron donor of photosystem I (PSI), as well as the electron acceptors A0, A1 and FX. PSI is a plastocyanin/cytochrome c6-ferredoxin oxidoreductase, converting photonic excitation into a charge separation, which transfers an electron from the donor P700 chlorophyll pair to the spectroscopically characterized acceptors A0, A1, FX, FA and FB in turn. Oxidized P700 is reduced on the lumenal side of the thylakoid membrane by plastocyanin or cytochrome c6. This chain is Photosystem I P700 chlorophyll a apoprotein A1, found in Nostoc punctiforme (strain ATCC 29133 / PCC 73102).